Reading from the N-terminus, the 180-residue chain is ATP synthase subunit delta (180 aa).

It belongs to the ATPase delta chain family. As to quaternary structure, F-type ATPases have 2 components, F(1) - the catalytic core - and F(0) - the membrane proton channel. F(1) has five subunits: alpha(3), beta(3), gamma(1), delta(1), epsilon(1). F(0) has three main subunits: a(1), b(2) and c(10-14). The alpha and beta chains form an alternating ring which encloses part of the gamma chain. F(1) is attached to F(0) by a central stalk formed by the gamma and epsilon chains, while a peripheral stalk is formed by the delta and b chains.

It localises to the cell membrane. F(1)F(0) ATP synthase produces ATP from ADP in the presence of a proton or sodium gradient. F-type ATPases consist of two structural domains, F(1) containing the extramembraneous catalytic core and F(0) containing the membrane proton channel, linked together by a central stalk and a peripheral stalk. During catalysis, ATP synthesis in the catalytic domain of F(1) is coupled via a rotary mechanism of the central stalk subunits to proton translocation. Its function is as follows. This protein is part of the stalk that links CF(0) to CF(1). It either transmits conformational changes from CF(0) to CF(1) or is implicated in proton conduction. This chain is ATP synthase subunit delta, found in Mycoplasma mobile (strain ATCC 43663 / 163K / NCTC 11711) (Mesomycoplasma mobile).